The sequence spans 784 residues: ATP-dependent 6-phosphofructokinase, platelet type (784 aa).

M1 bears the N-acetylmethionine mark. The tract at residues M1–I399 is N-terminal catalytic PFK domain 1. 3 positions are modified to phosphoserine: S6, S12, and S21. ATP contacts are provided by residues G34, R97–C98, and G127–S130. Mg(2+) is bound at residue D128. S142 carries the phosphoserine modification. Substrate is bound by residues S173 to D175, R210, M217 to R219, E273, R301, and H307 to R310. D175 (proton acceptor) is an active-site residue. Phosphoserine is present on S386. Residue K395 is modified to N6-acetyllysine. An interdomain linker region spans residues K400–C411. The C-terminal regulatory PFK domain 2 stretch occupies residues N412–V784. Beta-D-fructose 2,6-bisphosphate is bound at residue R481. K486 carries the N6-acetyllysine modification. Beta-D-fructose 2,6-bisphosphate is bound by residues T538–N542, R576, M583–G585, and E639. O-linked (GlcNAc) serine glycosylation is present at S540. At Y651 the chain carries Phosphotyrosine. Residues R665 and H671 to Q674 each bind beta-D-fructose 2,6-bisphosphate. K688 carries the post-translational modification N6-acetyllysine. A beta-D-fructose 2,6-bisphosphate-binding site is contributed by R744. At S783 the chain carries Phosphoserine.

Belongs to the phosphofructokinase type A (PFKA) family. ATP-dependent PFK group I subfamily. Eukaryotic two domain clade 'E' sub-subfamily. Homo- and heterotetramers. Phosphofructokinase (PFK) enzyme functions as a tetramer composed of different combinations of 3 types of subunits, called PFKM (M), PFKL (L) and PFKP (P). The composition of the PFK tetramer differs according to the tissue type it is present in. The kinetic and regulatory properties of the tetrameric enzyme are dependent on the subunit composition, hence can vary across tissues. Interacts with ATG4B; promoting phosphorylation of ATG4B. Mg(2+) is required as a cofactor. Post-translationally, glcNAcylation decreases enzyme activity. Phosphorylation at Ser-386 promotes interaction with ATG4B.

It is found in the cytoplasm. The enzyme catalyses beta-D-fructose 6-phosphate + ATP = beta-D-fructose 1,6-bisphosphate + ADP + H(+). Its pathway is carbohydrate degradation; glycolysis; D-glyceraldehyde 3-phosphate and glycerone phosphate from D-glucose: step 3/4. With respect to regulation, allosterically activated by ADP, AMP, or fructose 2,6-bisphosphate, and allosterically inhibited by ATP or citrate. In terms of biological role, catalyzes the phosphorylation of D-fructose 6-phosphate to fructose 1,6-bisphosphate by ATP, the first committing step of glycolysis. This is ATP-dependent 6-phosphofructokinase, platelet type (PFKP) from Pongo abelii (Sumatran orangutan).